We begin with the raw amino-acid sequence, 352 residues long: Anthranilate phosphoribosyltransferase (352 aa).

Residues glycine 94, 97-98 (GS), serine 102, 104-107 (NIST), 122-130 (KHGNRAVSS), and serine 134 each bind 5-phospho-alpha-D-ribose 1-diphosphate. Position 94 (glycine 94) interacts with anthranilate. Mg(2+) is bound at residue serine 106. Position 125 (asparagine 125) interacts with anthranilate. Arginine 180 lines the anthranilate pocket. The Mg(2+) site is built by aspartate 239 and glutamate 240.

Belongs to the anthranilate phosphoribosyltransferase family. As to quaternary structure, homodimer. Mg(2+) is required as a cofactor.

The enzyme catalyses N-(5-phospho-beta-D-ribosyl)anthranilate + diphosphate = 5-phospho-alpha-D-ribose 1-diphosphate + anthranilate. It participates in amino-acid biosynthesis; L-tryptophan biosynthesis; L-tryptophan from chorismate: step 2/5. Catalyzes the transfer of the phosphoribosyl group of 5-phosphorylribose-1-pyrophosphate (PRPP) to anthranilate to yield N-(5'-phosphoribosyl)-anthranilate (PRA). The polypeptide is Anthranilate phosphoribosyltransferase (Geobacter sp. (strain M21)).